Consider the following 946-residue polypeptide: MKPLSSPLQQYWQTVVERLPEPLAEESLSAQAKSVLTFSDFVQDSVIAHPEWLTELESQPPQADEWQHYAAWLQEALSNVSDEAGLMRELRLFRRRIMVRIAWAQTLALVTEESILQQLSHLAEMLIVAARDWLYDACCREWGTPCNAQGEAQPLLILGMGKLGGGELNFSSDIDLIFAWPEHGCTQGGRRELDNAQFFTRMGQRLIKVLDQPTQDGFVYRVDMRLRPFGESGPLVLSFAALEDYYQEQGRDWERYAMVKARIMGDSDGVYANELRAMLRPFVFRRYIDFSVIQSLRNMKGMIAREVRRRGLTDNIKLGAGGIREIEFIVQVFQLIRGGREPSLQSRSLLPTLSAIAALHLLSENDAEQLRVAYLFLRRLENLLQSINDEQTQTLPFDELNRARLAWAMDFADWPQLTGVLTAHMANVRRVFNELIGDDESETQEESLSEQWRELWQDALQEDDTTPVLAHLSEDDRKQVLMLIADFRKELDKRTIGPRGRQVLDHLMPHLLSDVCAREDAAVTLSRITALLVGIVTRTTYLELLSEFPAALKHLISLCAASPMIASQLARYPLLLDELLDPNTLYQPTATDAYRDELRQYLLRVPEDDEEQQLEALRQFKQAQLLRIAAADIAGTLPVMKVSDHLTWLAEAMIDAVVQQAWVQMVARYGKPNHLNEREGRGFAVVGYGKLGGWELGYSSDLDLIFLHDCPMDAMTDGEREIDGRQFYLRLAQRIMHLFSTRTSSGILYEVDARLRPSGAAGMLVTSAEAFADYQKNEAWTWEHQALVRARVVYGDPQLTAHFDAVRREIMTLPREGKTLQTEVREMREKMRAHLGNKHRDRFDIKADEGGITDIEFITQYLVLRYAHEKPKLTRWSDNVRILELLAQNDIMEEQEAMALTRAYTTLRDELHHLALQELPGHVSEDCFTAERELVRASWQKWLVEE.

The tract at residues 1–440 (MKPLSSPLQQ…VFNELIGDDE (440 aa)) is adenylyl removase. Residues 449–946 (SEQWRELWQD…ASWQKWLVEE (498 aa)) are adenylyl transferase.

This sequence belongs to the GlnE family. Mg(2+) is required as a cofactor.

It catalyses the reaction [glutamine synthetase]-O(4)-(5'-adenylyl)-L-tyrosine + phosphate = [glutamine synthetase]-L-tyrosine + ADP. It carries out the reaction [glutamine synthetase]-L-tyrosine + ATP = [glutamine synthetase]-O(4)-(5'-adenylyl)-L-tyrosine + diphosphate. Functionally, involved in the regulation of glutamine synthetase GlnA, a key enzyme in the process to assimilate ammonia. When cellular nitrogen levels are high, the C-terminal adenylyl transferase (AT) inactivates GlnA by covalent transfer of an adenylyl group from ATP to specific tyrosine residue of GlnA, thus reducing its activity. Conversely, when nitrogen levels are low, the N-terminal adenylyl removase (AR) activates GlnA by removing the adenylyl group by phosphorolysis, increasing its activity. The regulatory region of GlnE binds the signal transduction protein PII (GlnB) which indicates the nitrogen status of the cell. The polypeptide is Bifunctional glutamine synthetase adenylyltransferase/adenylyl-removing enzyme (Escherichia coli O81 (strain ED1a)).